We begin with the raw amino-acid sequence, 165 residues long: MKLFGFRSRRGQTVLGSIDHLYTGSGYRIRYSELQKIHKAAVKGDAAEMERCLARRSGDLDALDKQHRTALHLACASGHVKVVTLLVNRKCQIDIYDKENRTPLIQAVHCQEEACAVILLEHGANPNLKDIYGNTALHYAVYSESTSLAEKLLFHGENIEALDKV.

ANK repeat units lie at residues 66-95, 99-128, and 132-161; these read QHRT…QIDI, ENRT…NPNL, and YGNT…NIEA.

This is Putative ankyrin repeat domain-containing protein 20A5 (ANKRD20A5P) from Homo sapiens (Human).